Consider the following 327-residue polypeptide: Malate dehydrogenase (327 aa).

11–17 (GAAGQIA) contacts NAD(+). Substrate contacts are provided by R92 and R98. NAD(+) contacts are provided by residues N105, Q112, and 129–131 (VGN). The substrate site is built by N131 and R162. H187 acts as the Proton acceptor in catalysis.

Belongs to the LDH/MDH superfamily. MDH type 2 family.

It carries out the reaction (S)-malate + NAD(+) = oxaloacetate + NADH + H(+). Catalyzes the reversible oxidation of malate to oxaloacetate. The chain is Malate dehydrogenase from Nitrosospira multiformis (strain ATCC 25196 / NCIMB 11849 / C 71).